Here is a 259-residue protein sequence, read N- to C-terminus: Bisphosphoglycerate mutase (259 aa).

At Ser2 the chain carries N-acetylserine. Substrate contacts are provided by residues 10–17, 23–24, Arg62, 89–92, Arg100, and 116–117; these read RHGEGAWN, CS, ERHY, and RR. Residue His11 is the Tele-phosphohistidine intermediate of the active site. The Proton donor/acceptor role is filled by Glu89. Thr122 is modified (phosphothreonine). A substrate-binding site is contributed by 189–190; that stretch reads GN.

This sequence belongs to the phosphoglycerate mutase family. BPG-dependent PGAM subfamily. As to quaternary structure, homodimer.

The enzyme catalyses (2R)-3-phospho-glyceroyl phosphate = (2R)-2,3-bisphosphoglycerate + H(+). The catalysed reaction is (2R)-2-phosphoglycerate = (2R)-3-phosphoglycerate. With respect to regulation, at alkaline pH BPGM favors the synthase reaction; however, at lower pH the phosphatase reaction is dominant. Inhibited by citrate. In terms of biological role, plays a major role in regulating hemoglobin oxygen affinity by controlling the levels of its allosteric effector 2,3-bisphosphoglycerate (2,3-BPG). Also exhibits mutase (EC 5.4.2.11) activity. The polypeptide is Bisphosphoglycerate mutase (BPGM) (Bos taurus (Bovine)).